The primary structure comprises 563 residues: DNA repair protein rhp7 (563 aa).

A disordered region spans residues 1–101; sequence MSSGSRVRGP…TDEEAEDNED (101 aa). Polar residues predominate over residues 39-59; the sequence is ESAGQSTGTESEVIQTPTSVE. A compositionally biased stretch (basic residues) spans 78–90; that stretch reads VKRRNLRNQKKKK.

The protein belongs to the RAD7 family.

It localises to the nucleus. Involved in global genome repair (GGR) via nucleotide excision repair (NER), in conjunction with rhp16, after UV irradiation. In Schizosaccharomyces pombe (strain 972 / ATCC 24843) (Fission yeast), this protein is DNA repair protein rhp7 (rhp7).